The sequence spans 152 residues: UPF0756 membrane protein Daud_1310 (152 aa).

The next 4 membrane-spanning stretches (helical) occupy residues 14 to 34, 51 to 71, 76 to 96, and 112 to 132; these read LVGVLAKSHLIAAAACILLFI, LELGLLILLLTIMVPLANGKI, IIYNLTSIPGLLAILGGALAT, and IIFGLIIGSIFGILFLGGMPV.

It belongs to the UPF0756 family.

It localises to the cell membrane. This chain is UPF0756 membrane protein Daud_1310, found in Desulforudis audaxviator (strain MP104C).